We begin with the raw amino-acid sequence, 466 residues long: Ribulose bisphosphate carboxylase large chain (466 aa).

At K5 the chain carries N6,N6,N6-trimethyllysine. N114 and T164 together coordinate substrate. Residue K166 is the Proton acceptor of the active site. Position 168 (K168) interacts with substrate. 3 residues coordinate Mg(2+): K192, D194, and E195. K192 bears the N6-carboxylysine mark. H285 acts as the Proton acceptor in catalysis. Residues R286, H318, and S370 each contribute to the substrate site.

It belongs to the RuBisCO large chain family. Type I subfamily. As to quaternary structure, heterohexadecamer of 8 large chains and 8 small chains; disulfide-linked. The disulfide link is formed within the large subunit homodimers. The cofactor is Mg(2+). Post-translationally, the disulfide bond which can form in the large chain dimeric partners within the hexadecamer appears to be associated with oxidative stress and protein turnover.

Its subcellular location is the plastid. It is found in the chloroplast. It carries out the reaction 2 (2R)-3-phosphoglycerate + 2 H(+) = D-ribulose 1,5-bisphosphate + CO2 + H2O. The catalysed reaction is D-ribulose 1,5-bisphosphate + O2 = 2-phosphoglycolate + (2R)-3-phosphoglycerate + 2 H(+). RuBisCO catalyzes two reactions: the carboxylation of D-ribulose 1,5-bisphosphate, the primary event in carbon dioxide fixation, as well as the oxidative fragmentation of the pentose substrate in the photorespiration process. Both reactions occur simultaneously and in competition at the same active site. This is Ribulose bisphosphate carboxylase large chain from Coriaria myrtifolia (Tanner's sumac).